The following is a 198-amino-acid chain: MKIGVVAYQGSFEEHALSVKRVFDKIGKGEVIPVKRAKDLDVDGIIIPGGESTTIGQVALRLGLLDPLKEKISQGIPVLGTCAGAIMLSKEVTDAKVGKKSQPLIGVMDASVIRNYYGRQRESFEATVDLEEIEGGKERFVFIRAPAISKVWGKARALATLNDVIVMAQEDQILTTTFHPELSGTTSIHEYFLRMVKR.

G50 to S52 is a binding site for L-glutamine. C82 serves as the catalytic Nucleophile. L-glutamine-binding positions include R114 and I143–R144. Catalysis depends on charge relay system residues H179 and E181.

This sequence belongs to the glutaminase PdxT/SNO family. In the presence of PdxS, forms a dodecamer of heterodimers. Only shows activity in the heterodimer.

The catalysed reaction is aldehydo-D-ribose 5-phosphate + D-glyceraldehyde 3-phosphate + L-glutamine = pyridoxal 5'-phosphate + L-glutamate + phosphate + 3 H2O + H(+). It carries out the reaction L-glutamine + H2O = L-glutamate + NH4(+). It functions in the pathway cofactor biosynthesis; pyridoxal 5'-phosphate biosynthesis. In terms of biological role, catalyzes the hydrolysis of glutamine to glutamate and ammonia as part of the biosynthesis of pyridoxal 5'-phosphate. The resulting ammonia molecule is channeled to the active site of PdxS. In Metallosphaera sedula (strain ATCC 51363 / DSM 5348 / JCM 9185 / NBRC 15509 / TH2), this protein is Pyridoxal 5'-phosphate synthase subunit PdxT.